A 251-amino-acid polypeptide reads, in one-letter code: Ell1-associated factor 1 (251 aa).

2 disordered regions span residues 110–187 and 201–251; these read SKTV…DMEV and FDQE…EDED. Residues 112–123 are compositionally biased toward polar residues; it reads TVPSNAITQSDN. Residues 124-135 show a composition bias toward low complexity; the sequence is SQISESKSTSQS. The segment covering 143–157 has biased composition (basic and acidic residues); sequence RRKEKELEASKDGKI. 2 stretches are compositionally biased toward polar residues: residues 204 to 220 and 236 to 251; these read EFNS…TASK and SSAQ…EDED. A Phosphoserine modification is found at Ser-247.

It belongs to the EAF family. As to quaternary structure, forms a stable heterodimer with ell1. Ell1-eaf1 complex interacts with RNA polymerase II.

It is found in the nucleus. Activates transcription elongation by RNA polymerase II and pyrophosphorolysis as a complex with ell1. Acts as a transcriptional transactivator of ell1 elongation activities. This is Ell1-associated factor 1 (eaf1) from Schizosaccharomyces pombe (strain 972 / ATCC 24843) (Fission yeast).